Here is a 577-residue protein sequence, read N- to C-terminus: Beta-glucosidase 30 (577 aa).

A signal peptide spans 1–23 (MAKGSWFFIILFIISMLENMINS). Residues Gln-45, His-148, and 193–194 (NE) contribute to the a beta-D-glucoside site. Glu-194 functions as the Proton donor in the catalytic mechanism. Cysteines 213 and 221 form a disulfide. Asn-328 carries an N-linked (GlcNAc...) asparagine glycan. A beta-D-glucoside is bound at residue Tyr-338. Asn-368 carries an N-linked (GlcNAc...) asparagine glycan. A beta-D-glucoside is bound by residues Glu-410, Trp-460, 467–468 (EW), and Phe-476. The Nucleophile role is filled by Glu-410. N-linked (GlcNAc...) asparagine glycosylation is found at Asn-524 and Asn-544.

The protein belongs to the glycosyl hydrolase 1 family.

It carries out the reaction Hydrolysis of terminal, non-reducing beta-D-glucosyl residues with release of beta-D-glucose.. This is Beta-glucosidase 30 from Arabidopsis thaliana (Mouse-ear cress).